Here is a 382-residue protein sequence, read N- to C-terminus: Protein RecA (382 aa).

79 to 86 (GPESSGKT) contacts ATP. Residues 362–382 (ATKSAAKGSEVQADVKTKGAA) are disordered.

It belongs to the RecA family.

It localises to the cytoplasm. Can catalyze the hydrolysis of ATP in the presence of single-stranded DNA, the ATP-dependent uptake of single-stranded DNA by duplex DNA, and the ATP-dependent hybridization of homologous single-stranded DNAs. It interacts with LexA causing its activation and leading to its autocatalytic cleavage. This chain is Protein RecA, found in Synechococcus sp. (strain WH7803).